We begin with the raw amino-acid sequence, 143 residues long: Transcriptional regulator SlyA (143 aa).

Residues Glu2–Gln135 form the HTH marR-type domain. The segment at residues Gln49–Asp72 is a DNA-binding region (H-T-H motif).

This sequence belongs to the SlyA family. As to quaternary structure, homodimer.

Transcription regulator that can specifically activate or repress expression of target genes. The sequence is that of Transcriptional regulator SlyA from Edwardsiella tarda.